The following is a 495-amino-acid chain: ATP synthase subunit beta, chloroplastic (495 aa).

Residue Gly-172–Thr-179 participates in ATP binding.

Belongs to the ATPase alpha/beta chains family. F-type ATPases have 2 components, CF(1) - the catalytic core - and CF(0) - the membrane proton channel. CF(1) has five subunits: alpha(3), beta(3), gamma(1), delta(1), epsilon(1). CF(0) has four main subunits: a(1), b(1), b'(1) and c(9-12).

It is found in the plastid. It localises to the chloroplast thylakoid membrane. The catalysed reaction is ATP + H2O + 4 H(+)(in) = ADP + phosphate + 5 H(+)(out). Its function is as follows. Produces ATP from ADP in the presence of a proton gradient across the membrane. The catalytic sites are hosted primarily by the beta subunits. This is ATP synthase subunit beta, chloroplastic from Convallaria majalis (Lily of the valley).